We begin with the raw amino-acid sequence, 297 residues long: Homoserine kinase (297 aa).

82–92 (PVSRGLGSSAA) lines the ATP pocket.

Belongs to the GHMP kinase family. Homoserine kinase subfamily.

Its subcellular location is the cytoplasm. It catalyses the reaction L-homoserine + ATP = O-phospho-L-homoserine + ADP + H(+). The protein operates within amino-acid biosynthesis; L-threonine biosynthesis; L-threonine from L-aspartate: step 4/5. In terms of biological role, catalyzes the ATP-dependent phosphorylation of L-homoserine to L-homoserine phosphate. This is Homoserine kinase from Clostridium botulinum (strain Okra / Type B1).